A 225-amino-acid chain; its full sequence is Transcription factor HES-7 (225 aa).

A bHLH domain is found at 12 to 69 (GPKMLKPLVEKRRRDRINRSLEELRLLLLERTRDQNLRNPKLEKAEILEFAVGYLRER). The Orange domain occupies 92–122 (YLSGFRECLLRLAAFAHDASPAARSQLFSAL). Residues 124–225 (GYRRPKPPRP…PPPAFWRPWP (102 aa)) are disordered. Pro residues-rich tracts occupy residues 140–149 (LPAPRPPLDP) and 213–225 (PSLP…RPWP). Positions 221 to 224 (WRPW) match the WRPW motif motif.

As to quaternary structure, transcription repression requires formation of a complex with a corepressor protein of the Groucho/TLE family.

It localises to the nucleus. Functionally, transcriptional repressor. Represses transcription from both N box- and E box-containing promoters. May with HES1, cooperatively regulate somite formation in the presomitic mesoderm (PSM). May function as a segmentation clock, which is essential for coordinated somite segmentation. The chain is Transcription factor HES-7 (Hes7) from Mus musculus (Mouse).